A 531-amino-acid chain; its full sequence is 5-(hydroxymethyl)furfural oxidase (531 aa).

Residues 15–16, 36–37, tryptophan 68, leucine 94, glycine 98, 102–105, valine 233, and tryptophan 466 each bind FAD; these read TA, EA, and NMVV. Catalysis depends on histidine 467, which acts as the Proton acceptor. FAD contacts are provided by residues alanine 501 and 512–513; that span reads TN.

The protein belongs to the GMC oxidoreductase family. As to quaternary structure, monomer. It depends on FAD as a cofactor.

The enzyme catalyses 5-hydroxymethylfurfural + 3 O2 + 2 H2O = 2,5-dicarboxyfuran + 3 H2O2 + 2 H(+). The catalysed reaction is benzylthiol + O2 = benzothialdehyde + H2O2. Functionally, involved in the degradation and detoxification of 5-(hydroxymethyl)furfural (HMF) by mediating its oxidation to furan-2,5-dicarboxylate (FDCA), a biobased platform chemical for the production of polymers. Active with a wide range of aromatic and aliphatic primary alcohols and aldehydes: acts on alcohol groups and requires the spontaneous hydration of aldehyde groups for their oxidation. To a lesser extent, is also able to catalyze the oxidation of thiols that are structurally similar to its alcohol substrates, yielding the corresponding thiocarbonyls. The protein is 5-(hydroxymethyl)furfural oxidase of Methylovorus sp. (strain MP688).